The primary structure comprises 925 residues: Neuropilin-2 (925 aa).

The signal sequence occupies residues 1–22; it reads MDMFPLTWIFLALYFSGHKVRS. Residues 23–858 are Extracellular-facing; that stretch reads QQDPPCGGRL…EKSWLYTLDP (836 aa). 3 disulfide bridges follow: Cys28–Cys55, Cys83–Cys105, and Cys149–Cys175. 2 consecutive CUB domains span residues 28–142 and 149–267; these read CGGR…YEIF and CSKN…YYLV. Residues Asn152 and Asn157 are each glycosylated (N-linked (GlcNAc...) asparagine). Ca(2+) contacts are provided by Glu197, Asp211, and Asp252. The cysteines at positions 208 and 230 are disulfide-linked. 2 cysteine pairs are disulfide-bonded: Cys277–Cys427 and Cys434–Cys592. 2 consecutive F5/8 type C domains span residues 277 to 427 and 434 to 592; these read CNAP…LFGC and CSNM…VLGC. Positions 297-310 are enriched in polar residues; sequence STFSDGRWTPQQSR. Residues 297–317 form a disordered region; that stretch reads STFSDGRWTPQQSRLHGDDNG. Residues 601–621 form a disordered region; it reads VETLGPTVKSEETTTPYPMDE. A glycan (N-linked (GlcNAc...) asparagine) is linked at Asn629. Residues 642–802 form the MAM domain; the sequence is SGFNCNFDFP…TDVPLENCME (161 aa). Positions 820–830 are enriched in acidic residues; the sequence is YEDEIDDDYEG. The tract at residues 820 to 849 is disordered; it reads YEDEIDDDYEGDWNNSSSTSGAGSPSSGKE. N-linked (GlcNAc...) asparagine glycosylation is found at Asn833 and Asn834. Over residues 835-846 the composition is skewed to low complexity; that stretch reads SSSTSGAGSPSS. A helical membrane pass occupies residues 859–883; sequence ILITIIAMSSLGVLLGATCAGLLLY. The Cytoplasmic portion of the chain corresponds to 884–925; that stretch reads CTCSYSGLSSRSCTTLENYNFELYDGLKHKVKINHQKCCSEA.

Belongs to the neuropilin family. Heterodimer with NRP1. Binds PLXNB1. Found in certain neuronal populations of the CNS, including dorsal root ganglia, and in other non-neuronal tissues including mesenchymal tissue lining in the ribs.

The protein resides in the membrane. High affinity receptor for semaphorins 3C, 3F, VEGF-165 and VEGF-145 isoforms of VEGF, and the PLGF-2 isoform of PGF. In Rattus norvegicus (Rat), this protein is Neuropilin-2 (Nrp2).